Consider the following 212-residue polypeptide: Urease accessory protein UreG (212 aa).

GTP is bound at residue 15 to 22 (GPVGSGKT).

Belongs to the SIMIBI class G3E GTPase family. UreG subfamily. Homodimer. UreD, UreF and UreG form a complex that acts as a GTP-hydrolysis-dependent molecular chaperone, activating the urease apoprotein by helping to assemble the nickel containing metallocenter of UreC. The UreE protein probably delivers the nickel.

The protein localises to the cytoplasm. Functionally, facilitates the functional incorporation of the urease nickel metallocenter. This process requires GTP hydrolysis, probably effectuated by UreG. This chain is Urease accessory protein UreG, found in Opitutus terrae (strain DSM 11246 / JCM 15787 / PB90-1).